The chain runs to 503 residues: ATP-dependent RNA helicase dbp3 (503 aa).

A compositionally biased stretch (basic and acidic residues) spans 1-13 (MGKRVSHNEGADR). The segment at 1 to 37 (MGKRVSHNEGADRRPKKKAKNEKPEKETMESPAADVT) is disordered. The Q motif motif lies at 104-112 (SFASPTPIQ). The 177-residue stretch at 116–292 (WPLLFAGRDV…ATFMTSAVTV (177 aa)) folds into the Helicase ATP-binding domain. 129 to 136 (AETGSGKT) contacts ATP. Residues 239–242 (DEAD) carry the DEAD box motif. The Helicase C-terminal domain occupies 323-472 (RLVQLLSENQ…EVPQELLKFG (150 aa)).

It belongs to the DEAD box helicase family. DDX5/DBP2 subfamily.

It localises to the nucleus. Its subcellular location is the nucleolus. The catalysed reaction is ATP + H2O = ADP + phosphate + H(+). ATP-dependent RNA helicase required for 60S ribosomal subunit synthesis. Involved in efficient pre-rRNA processing, predominantly at site A3, which is necessary for the normal formation of 25S and 5.8S rRNAs. The sequence is that of ATP-dependent RNA helicase dbp3 (dbp3) from Aspergillus clavatus (strain ATCC 1007 / CBS 513.65 / DSM 816 / NCTC 3887 / NRRL 1 / QM 1276 / 107).